A 334-amino-acid polypeptide reads, in one-letter code: tRNA N6-adenosine threonylcarbamoyltransferase (334 aa).

The Fe cation site is built by histidine 110 and histidine 114. Substrate contacts are provided by residues 133-137 (IVSGG), aspartate 166, glycine 179, aspartate 183, and asparagine 275. Position 303 (aspartate 303) interacts with Fe cation.

It belongs to the KAE1 / TsaD family. Requires Fe(2+) as cofactor.

Its subcellular location is the cytoplasm. It carries out the reaction L-threonylcarbamoyladenylate + adenosine(37) in tRNA = N(6)-L-threonylcarbamoyladenosine(37) in tRNA + AMP + H(+). Required for the formation of a threonylcarbamoyl group on adenosine at position 37 (t(6)A37) in tRNAs that read codons beginning with adenine. Is involved in the transfer of the threonylcarbamoyl moiety of threonylcarbamoyl-AMP (TC-AMP) to the N6 group of A37, together with TsaE and TsaB. TsaD likely plays a direct catalytic role in this reaction. In Salinibacter ruber (strain DSM 13855 / M31), this protein is tRNA N6-adenosine threonylcarbamoyltransferase.